The following is a 113-amino-acid chain: Hydrogenase maturation factor HypA (113 aa).

Histidine 2 contacts Ni(2+). 4 residues coordinate Zn(2+): cysteine 73, cysteine 76, cysteine 89, and cysteine 92.

This sequence belongs to the HypA/HybF family.

Functionally, involved in the maturation of [NiFe] hydrogenases. Required for nickel insertion into the metal center of the hydrogenase. The protein is Hydrogenase maturation factor HypA of Aeromonas salmonicida (strain A449).